Consider the following 193-residue polypeptide: Segregation and condensation protein B (193 aa).

Belongs to the ScpB family. In terms of assembly, homodimer. Homodimerization may be required to stabilize the binding of ScpA to the Smc head domains. Component of a cohesin-like complex composed of ScpA, ScpB and the Smc homodimer, in which ScpA and ScpB bind to the head domain of Smc. The presence of the three proteins is required for the association of the complex with DNA.

The protein localises to the cytoplasm. Its function is as follows. Participates in chromosomal partition during cell division. May act via the formation of a condensin-like complex containing Smc and ScpA that pull DNA away from mid-cell into both cell halves. The sequence is that of Segregation and condensation protein B from Streptococcus thermophilus (strain ATCC BAA-250 / LMG 18311).